The sequence spans 131 residues: UPF0102 protein YraN (131 aa).

Positions 1 to 19 are enriched in polar residues; that stretch reads MATVPTRSGSPRQLTTKQT. The segment at 1 to 20 is disordered; sequence MATVPTRSGSPRQLTTKQTG.

The protein belongs to the UPF0102 family.

The sequence is that of UPF0102 protein YraN from Escherichia coli O17:K52:H18 (strain UMN026 / ExPEC).